A 206-amino-acid chain; its full sequence is Ion-translocating oxidoreductase complex subunit G (206 aa).

The chain crosses the membrane as a helical span at residues 9 to 29 (GITLALFAAGSTGLTAAINQM). An FMN phosphoryl threonine modification is found at Thr-174.

Belongs to the RnfG family. As to quaternary structure, the complex is composed of six subunits: RsxA, RsxB, RsxC, RsxD, RsxE and RsxG. FMN is required as a cofactor.

The protein resides in the cell inner membrane. Its function is as follows. Part of a membrane-bound complex that couples electron transfer with translocation of ions across the membrane. Required to maintain the reduced state of SoxR. Probably transfers electron from NAD(P)H to SoxR. The protein is Ion-translocating oxidoreductase complex subunit G of Escherichia coli (strain K12).